Reading from the N-terminus, the 265-residue chain is Hydroxyethylthiazole kinase (265 aa).

Methionine 50 is a substrate binding site. Residues arginine 125 and threonine 171 each coordinate ATP. Position 198 (glycine 198) interacts with substrate.

Belongs to the Thz kinase family. It depends on Mg(2+) as a cofactor.

The enzyme catalyses 5-(2-hydroxyethyl)-4-methylthiazole + ATP = 4-methyl-5-(2-phosphooxyethyl)-thiazole + ADP + H(+). The protein operates within cofactor biosynthesis; thiamine diphosphate biosynthesis; 4-methyl-5-(2-phosphoethyl)-thiazole from 5-(2-hydroxyethyl)-4-methylthiazole: step 1/1. Its function is as follows. Catalyzes the phosphorylation of the hydroxyl group of 4-methyl-5-beta-hydroxyethylthiazole (THZ). The polypeptide is Hydroxyethylthiazole kinase (Salmonella paratyphi A (strain ATCC 9150 / SARB42)).